A 117-amino-acid polypeptide reads, in one-letter code: MDTKMQSLPTTHPHPHSSSRPQSHTSNQCNQCTCSHHCRSCSQAGHAGSSSSPSPGPPMKHPKPSVHSRHSPARPSHRGSCPKNRKTFEGKVSKRKAVRRRKRTHRAKRRSSGRRYK.

Residues 1-117 (MDTKMQSLPT…KRRSSGRRYK (117 aa)) form a disordered region. The segment covering 7–26 (SLPTTHPHPHSSSRPQSHTS) has biased composition (low complexity). Zn(2+) is bound by residues His-12, His-14, His-16, His-24, Cys-32, Cys-34, Cys-38, and Cys-41. Low complexity predominate over residues 44–53 (AGHAGSSSSP). Composition is skewed to basic residues over residues 60-77 (KHPKPSVHSRHSPARPSH) and 93-117 (SKRKAVRRRKRTHRAKRRSSGRRYK). Residues 90–98 (GKVSKRKAV) carry the Nuclear localization signal motif. Ser-112 carries the post-translational modification Phosphoserine.

This sequence belongs to the nuclear transition protein 2 family.

It is found in the nucleus. The protein localises to the chromosome. In terms of biological role, plays a key role in the replacement of histones to protamine in the elongating spermatids of mammals. In condensing spermatids, loaded onto the nucleosomes, where it promotes the recruitment and processing of protamines, which are responsible for histone eviction. The histone H2AB1-H2BC1/TH2B dimer is required for loading of TNP2 onto chromatin. The polypeptide is Nuclear transition protein 2 (Mus musculus (Mouse)).